Here is a 122-residue protein sequence, read N- to C-terminus: Ribosomal protein eL22-like 1 (122 aa).

Ser-112, Ser-118, and Ser-120 each carry phosphoserine.

It belongs to the eukaryotic ribosomal protein eL22 family.

This chain is Ribosomal protein eL22-like 1 (Rpl22l1), found in Mus musculus (Mouse).